The primary structure comprises 451 residues: E3 ubiquitin-protein ligase trul-1 (451 aa).

The RING-type; atypical zinc-finger motif lies at 13–54 (CSICFEDLKQNDKISAIVCGHIYHHGCISQWIATKRQCPSCR). Coiled-coil stretches lie at residues 96-130 (LKVEQEKLGTLNTENKNLKDTVKSLEKKIIREKDK) and 209-243 (NKDLTDKRREAAKEIEQLKMEVQSLKRAAQEDAAI). Disordered stretches follow at residues 270–297 (RDVLETETPPPAKRKSMGFDESSQMIDP) and 389–442 (KIPN…SSTS). Low complexity predominate over residues 427–442 (STRISSFFSRTTSSTS).

Belongs to the TRAIP family.

The protein resides in the nucleus. It is found in the chromosome. It carries out the reaction S-ubiquitinyl-[E2 ubiquitin-conjugating enzyme]-L-cysteine + [acceptor protein]-L-lysine = [E2 ubiquitin-conjugating enzyme]-L-cysteine + N(6)-ubiquitinyl-[acceptor protein]-L-lysine.. Its pathway is protein modification; protein ubiquitination. Functionally, E3 ubiquitin ligase that acts as a key regulator of DNA repair in response to replication stress. Acts by mediating ubiquitination of the CMG helicase complex, promoting the unloading of the CMG helicase complex by the p97 ATPase (cdc-48.1 or cdc-48.2). This chain is E3 ubiquitin-protein ligase trul-1, found in Caenorhabditis elegans.